The sequence spans 247 residues: Probable transcriptional regulatory protein YPK_2146 (247 aa).

The protein belongs to the TACO1 family.

It localises to the cytoplasm. In Yersinia pseudotuberculosis serotype O:3 (strain YPIII), this protein is Probable transcriptional regulatory protein YPK_2146.